The following is a 569-amino-acid chain: MASQLDLIGGDYIAGISINPPTNSRVTSVYSEVQASRIDHTLPLPSVFKTPFKIIDGPPSSSAGHPEEIEKLFPNLFGQPSALLVPNQSNEVSSDQKLKIGVVLSGGQAPGGHNVICGIFDYLQEYARGSSLFGFRGGPAGIMKGKYIELTSEFVYPYRNQGGFDMICSGRDKIETPEQFKQAEETVTKMDLDGLVVIGGDDSNTNACLLAEHFRAKNMKTLVIGCPKTIDGDLKSKEVPTSFGFDTACKIYSEMIGNVMIDARSTGKYYHFVRLMGRAASHITLECALQTHPNITIIGEEVFEKKLTLKNVTDNIVDVIYKRAENGYNYGVILVPEGLIDFIPEVQQLISELNEVLAEGNVDEEGQWKKNLKKETLEIFEFLPQTIQEQLMLERDPHGNVQVAKIETEKMLIQMVETELEKKKTEGTYEREFMGKSHFFGYEGRCGLPTNFDATYCYALGYGAGSLLQSGKTGLISSVGNLAAPVEEWTVGGTALTSLMDVERRHGKFKPVIKKAMVELEGAPFKKFASQREEWALKNRYISPGPIQFKGPGSDARNHTLMLELGAQA.

Position 107 (Gly107) interacts with diphosphate. Asp201 is a binding site for Mg(2+). Substrate is bound by residues 229–231 (TID), 268–269 (KY), 276–278 (MGR), Glu337, and 442–445 (YEGR). The active-site Proton acceptor is Asp231.

It belongs to the phosphofructokinase type A (PFKA) family. PPi-dependent PFK group II subfamily. Clade 'Long' sub-subfamily. As to quaternary structure, tetramer of two alpha (regulatory) and two beta (catalytic) chains. It depends on Mg(2+) as a cofactor.

It is found in the cytoplasm. It carries out the reaction beta-D-fructose 6-phosphate + diphosphate = beta-D-fructose 1,6-bisphosphate + phosphate + H(+). Its pathway is carbohydrate degradation; glycolysis; D-glyceraldehyde 3-phosphate and glycerone phosphate from D-glucose: step 3/4. Its activity is regulated as follows. Allosterically activated by fructose 2,6-bisphosphate. Catalytic subunit of pyrophosphate--fructose 6-phosphate 1-phosphotransferase. Catalyzes the phosphorylation of D-fructose 6-phosphate, the first committing step of glycolysis. Uses inorganic phosphate (PPi) as phosphoryl donor instead of ATP like common ATP-dependent phosphofructokinases (ATP-PFKs), which renders the reaction reversible, and can thus function both in glycolysis and gluconeogenesis. The protein is Pyrophosphate--fructose 6-phosphate 1-phosphotransferase subunit beta 2 of Arabidopsis thaliana (Mouse-ear cress).